A 2892-amino-acid chain; its full sequence is Inositol 1,4,5-trisphosphate receptor itr-1 (2892 aa).

Residues 1–2475 (MNPSYGRVRK…YPLPEHSNSS (2475 aa)) are Cytoplasmic-facing. 4 consecutive MIR domains span residues 192–246 (GNVI…IEPA), 319–379 (QNSV…VQVV), 386–466 (GGTA…LGPT), and 490–551 (NKEV…LLPV). 357–361 (RMTNR) provides a ligand contact to 1D-myo-inositol 1,4,5-trisphosphate. Residues 625-628 (KLLR) and 689-691 (YRK) contribute to the 1D-myo-inositol 1,4,5-trisphosphate site. The disordered stretch occupies residues 1030 to 1056 (MMRGGNKENSKDLAKTPSVTAEEAGRT). Over residues 1034–1043 (GNKENSKDLA) the composition is skewed to basic and acidic residues. Residues 2476–2496 (ISLGNLYSWFAVFSSFLLAHY) form a helical membrane-spanning segment. At 2497-2514 (LRHDKIYLHKTSLLILAS) the chain is on the extracellular side. The chain crosses the membrane as a helical span at residues 2515-2535 (LCFLLLSSIGVTLTLYIFGIL). Residues 2536 to 2572 (QLVNKIVHVVAFVSNKGLEDRPIAEILACRNLHYLLV) lie on the Cytoplasmic side of the membrane. A helical transmembrane segment spans residues 2573 to 2593 (YLFICILGLLVHPMIYCILLF). The Extracellular portion of the chain corresponds to 2594 to 2615 (DIIFTEETLQNVIASVTRNYQS). Residues 2616–2636 (IVWTGLLALILLYFFSILGFL) form a helical membrane-spanning segment. The Cytoplasmic portion of the chain corresponds to 2637 to 2735 (YFRHDFYLEV…FIWRVAYDMT (99 aa)). Over residues 2655–2666 (ATISSGIPSETC) the composition is skewed to polar residues. The segment at 2655–2685 (ATISSGIPSETCPSEGCPGLQPSEKDDNDDE) is disordered. A helical transmembrane segment spans residues 2736–2756 (FFVVLIVIVLNLIFGVIIDTF). Residues 2757–2892 (GDLRAEKNEK…RAFMEQFQPR (136 aa)) are Extracellular-facing.

The protein belongs to the InsP3 receptor family. In terms of assembly, interacts with myo-1, myo-2, unc-54/myo-4 and nmy-2. Also interacts with iri-1. Isoform a is expressed in the anterior cells of the pharyngeal terminal bulb, vulva, rectal epithelial cells, spicule protractor muscles of the proctodeum and male-specific neuron CP8 or CP9. Isoform d is expressed in the spermatheca, excretory cell, amphid socket cells, PDA motor neuron, spicule retractor muscles, gubernaculum retractor muscles, posterior oblique muscles, diagonal muscles and the vas deferens. Also expressed in the intestine, pharynx, pharyngeal isthmus, pharyngeal intestinal valve, somatic gonad, hypodermal cells of the vulva, uterine sheath cells, tail, head, LUA motor neuron and the embryonic epidermis (at protein level).

The protein localises to the endoplasmic reticulum membrane. Its function is as follows. Receptor for inositol 1,4,5-trisphosphate, a second messenger that regulates intracellular calcium homeostasis. Binds in vitro to both inositol 1,4,5-trisphosphate (1,4,5-InsP3) and inositol 2,4,5-trisphosphate (2,4,5-InsP3) with high affinity and does not discriminate between the phosphate at 1 or 2 position. Can also bind inositol 1,3,4,5-tetrakisphosphate (1,3,4,5-InsP4) and inositol 4,5-bisphosphate (4,5-InsP2), but with lower affinity. Acts as a timekeeper/rhythm generator via calcium signaling, affecting the defecation cycle and pharyngeal pumping. Affects normal hermaphrodite and male fertility as a participant in intracellular signaling by acting downstream of let-23/lin-3 which regulates ovulation, spermathecal valve dilation and male mating behavior. Important for early embryonic development; controls epidermal cell migration and may also regulate filopodial protrusive activity during epithelial morphogenesis. Component of inositol trisphosphate (IP3)-mediated downstream signaling pathways that controls amphid sensory neuronal (ASH)-mediated response to nose touch and benzaldehyde but not other ASH-mediated responses. Involved in modulating lifespan, acting downstream of transcription factor atf-6. The chain is Inositol 1,4,5-trisphosphate receptor itr-1 from Caenorhabditis elegans.